Here is a 273-residue protein sequence, read N- to C-terminus: Dormancy associated translation inhibitor (273 aa).

As to quaternary structure, interacts with human TLR2.

In terms of biological role, involved in translation regulation. Can also stimulate macrophages and peripheral blood mononuclear cells (PBMC) to secrete important cytokines that may be significant in granuloma formation and its maintenance. Increases secretion of IFN-gamma, TNF-alpha, IL-1 beta and IL-8 through human Toll-like receptor 2 (TLR2) signaling pathway. This Mycobacterium tuberculosis (strain CDC 1551 / Oshkosh) protein is Dormancy associated translation inhibitor.